A 341-amino-acid polypeptide reads, in one-letter code: Spindle assembly checkpoint protein BUB3 (341 aa).

7 WD repeats span residues 9 to 48, 54 to 96, 97 to 137, 144 to 185, 191 to 233, 249 to 288, and 292 to 329; these read APKD…KNVD, RYKH…QALT, NNEA…DGVI, SNNT…DDNG, GLKY…YNSS, NLAY…KIKN, and FNED…IELN.

This sequence belongs to the WD repeat BUB3 family. Component of the mitotic checkpoint complex (MCC) which consists of MAD2, MAD3, BUB3 and CDC20. Part of complex consisting of MAD1, BUB1 and BUB3 after activation of spindle checkpoint. Part of the BUB1-BUB3 complex, composed of BUB1 and BUB3. Interacts with SPC105 (via phosphorylated MELT motifs); the interaction is direct and occurs when part of the BUB1-BUB3 complex. Interacts with MAD3; the interaction is direct. Phosphorylated by BUB1.

It is found in the nucleus. The protein localises to the chromosome. Its subcellular location is the centromere. It localises to the kinetochore. Involved in mitotic spindle assembly checkpoint signaling, a process that delays anaphase until chromosomes are bioriented on the spindle, and in the repair of incorrect mitotic kinetochore-spindle microtubule attachments. Component of the mitotic checkpoint complex (MCC) which inhibits the ubiquitin ligase activity of the anaphase promoting complex/cyclosome (APC/C) by preventing its activation by CDC20. This Saccharomyces cerevisiae (strain ATCC 204508 / S288c) (Baker's yeast) protein is Spindle assembly checkpoint protein BUB3 (BUB3).